The chain runs to 218 residues: Large ribosomal subunit protein uL3 (218 aa).

Gln154 is subject to N5-methylglutamine.

This sequence belongs to the universal ribosomal protein uL3 family. Part of the 50S ribosomal subunit. Forms a cluster with proteins L14 and L19. In terms of processing, methylated by PrmB.

In terms of biological role, one of the primary rRNA binding proteins, it binds directly near the 3'-end of the 23S rRNA, where it nucleates assembly of the 50S subunit. This chain is Large ribosomal subunit protein uL3, found in Polynucleobacter asymbioticus (strain DSM 18221 / CIP 109841 / QLW-P1DMWA-1) (Polynucleobacter necessarius subsp. asymbioticus).